We begin with the raw amino-acid sequence, 594 residues long: Aspartate--tRNA(Asp/Asn) ligase (594 aa).

Glutamate 173 lines the L-aspartate pocket. The segment at 197 to 200 (QLFK) is aspartate. Arginine 219 is an L-aspartate binding site. Residues 219–221 (RDE) and glutamine 228 each bind ATP. Histidine 449 provides a ligand contact to L-aspartate. Glutamate 482 contributes to the ATP binding site. L-aspartate is bound at residue arginine 489. 534 to 537 (GLDR) is an ATP binding site.

Belongs to the class-II aminoacyl-tRNA synthetase family. Type 1 subfamily. In terms of assembly, homodimer.

The protein localises to the cytoplasm. It carries out the reaction tRNA(Asx) + L-aspartate + ATP = L-aspartyl-tRNA(Asx) + AMP + diphosphate. In terms of biological role, aspartyl-tRNA synthetase with relaxed tRNA specificity since it is able to aspartylate not only its cognate tRNA(Asp) but also tRNA(Asn). Reaction proceeds in two steps: L-aspartate is first activated by ATP to form Asp-AMP and then transferred to the acceptor end of tRNA(Asp/Asn). This Saccharophagus degradans (strain 2-40 / ATCC 43961 / DSM 17024) protein is Aspartate--tRNA(Asp/Asn) ligase.